Consider the following 197-residue polypeptide: MKQIDIDDELYQYIASNTQSIGESASTILRRLLNLSGEKIQTANVELNQNNQTTTTLPKVPPVAEQTPALAAKPSAVAEKSVQQKNANVFNVLNKEELAMQKGVVGRFLFILSAFYRTHKTDFRAVLDIKGRDRVYFATSKEDLVNSGSSMNPKNITDSEYWVMTNSNTTRKKMMLHEVALCLGYSTEQAEKIRDYL.

This sequence belongs to the SeqA family. In terms of assembly, homodimer. Polymerizes to form helical filaments.

It is found in the cytoplasm. In terms of biological role, negative regulator of replication initiation, which contributes to regulation of DNA replication and ensures that replication initiation occurs exactly once per chromosome per cell cycle. Binds to pairs of hemimethylated GATC sequences in the oriC region, thus preventing assembly of replication proteins and re-initiation at newly replicated origins. Repression is relieved when the region becomes fully methylated. The protein is Negative modulator of initiation of replication of Pseudoalteromonas translucida (strain TAC 125).